The following is a 304-amino-acid chain: MNNQDIYINLLNILSKEDIKVDEPMKKHISFRVGGPADILVRPRTEEQLKNVLKLVKEESIPYLIIGNGSNILIKDGGIRGVVIELADNFNSYEINDTRMTAQSGALLSVLGKALQKQELKGFEFASGIPGTLGGALAMNAGAYGGEMKDIVKSVRLMDMEGNIFELSNEQMEFGYRKSIISKNGYIALSAELELQEGNYDEIKSLMDDLATRRITKQPLNFASAGSTFKRPTGYFAGKLIEETGLRGLTLRGAQVSEKHCGFVVNQGEASAKDILDLIYVIKSAVYAKFGVMLEEEVKILGED.

The 167-residue stretch at 32–198 (RVGGPADILV…LSAELELQEG (167 aa)) folds into the FAD-binding PCMH-type domain. Arg-177 is an active-site residue. The active-site Proton donor is the Ser-227. Glu-297 is a catalytic residue.

Belongs to the MurB family. The cofactor is FAD.

The protein resides in the cytoplasm. It catalyses the reaction UDP-N-acetyl-alpha-D-muramate + NADP(+) = UDP-N-acetyl-3-O-(1-carboxyvinyl)-alpha-D-glucosamine + NADPH + H(+). It functions in the pathway cell wall biogenesis; peptidoglycan biosynthesis. Its function is as follows. Cell wall formation. The sequence is that of UDP-N-acetylenolpyruvoylglucosamine reductase from Clostridioides difficile (strain 630) (Peptoclostridium difficile).